Consider the following 462-residue polypeptide: ATP synthase subunit beta (462 aa).

149–156 (GGAGVGKT) provides a ligand contact to ATP.

This sequence belongs to the ATPase alpha/beta chains family. In terms of assembly, F-type ATPases have 2 components, CF(1) - the catalytic core - and CF(0) - the membrane proton channel. CF(1) has five subunits: alpha(3), beta(3), gamma(1), delta(1), epsilon(1). CF(0) has three main subunits: a(1), b(2) and c(9-12). The alpha and beta chains form an alternating ring which encloses part of the gamma chain. CF(1) is attached to CF(0) by a central stalk formed by the gamma and epsilon chains, while a peripheral stalk is formed by the delta and b chains.

It localises to the cell inner membrane. It carries out the reaction ATP + H2O + 4 H(+)(in) = ADP + phosphate + 5 H(+)(out). Functionally, produces ATP from ADP in the presence of a proton gradient across the membrane. The catalytic sites are hosted primarily by the beta subunits. The sequence is that of ATP synthase subunit beta from Fusobacterium nucleatum subsp. nucleatum (strain ATCC 25586 / DSM 15643 / BCRC 10681 / CIP 101130 / JCM 8532 / KCTC 2640 / LMG 13131 / VPI 4355).